Consider the following 203-residue polypeptide: Histidine biosynthesis bifunctional protein HisIE (203 aa).

The tract at residues 1 to 114 is phosphoribosyl-AMP cyclohydrolase; the sequence is MLTEQQRREL…FGDASHQWLF (114 aa). A phosphoribosyl-ATP pyrophosphohydrolase region spans residues 115–203; sequence LYQLEQLLAE…VIDNLRKRHQ (89 aa).

In the N-terminal section; belongs to the PRA-CH family. This sequence in the C-terminal section; belongs to the PRA-PH family.

It localises to the cytoplasm. The catalysed reaction is 1-(5-phospho-beta-D-ribosyl)-ATP + H2O = 1-(5-phospho-beta-D-ribosyl)-5'-AMP + diphosphate + H(+). The enzyme catalyses 1-(5-phospho-beta-D-ribosyl)-5'-AMP + H2O = 1-(5-phospho-beta-D-ribosyl)-5-[(5-phospho-beta-D-ribosylamino)methylideneamino]imidazole-4-carboxamide. The protein operates within amino-acid biosynthesis; L-histidine biosynthesis; L-histidine from 5-phospho-alpha-D-ribose 1-diphosphate: step 2/9. It functions in the pathway amino-acid biosynthesis; L-histidine biosynthesis; L-histidine from 5-phospho-alpha-D-ribose 1-diphosphate: step 3/9. This chain is Histidine biosynthesis bifunctional protein HisIE (hisI), found in Salmonella typhimurium (strain LT2 / SGSC1412 / ATCC 700720).